A 218-amino-acid polypeptide reads, in one-letter code: ATP phosphoribosyltransferase (218 aa).

The protein belongs to the ATP phosphoribosyltransferase family. Short subfamily. In terms of assembly, heteromultimer composed of HisG and HisZ subunits.

It is found in the cytoplasm. It catalyses the reaction 1-(5-phospho-beta-D-ribosyl)-ATP + diphosphate = 5-phospho-alpha-D-ribose 1-diphosphate + ATP. It participates in amino-acid biosynthesis; L-histidine biosynthesis; L-histidine from 5-phospho-alpha-D-ribose 1-diphosphate: step 1/9. In terms of biological role, catalyzes the condensation of ATP and 5-phosphoribose 1-diphosphate to form N'-(5'-phosphoribosyl)-ATP (PR-ATP). Has a crucial role in the pathway because the rate of histidine biosynthesis seems to be controlled primarily by regulation of HisG enzymatic activity. This chain is ATP phosphoribosyltransferase, found in Lactiplantibacillus plantarum (strain ATCC BAA-793 / NCIMB 8826 / WCFS1) (Lactobacillus plantarum).